We begin with the raw amino-acid sequence, 95 residues long: Large ribosomal subunit protein uL23 (95 aa).

It belongs to the universal ribosomal protein uL23 family. In terms of assembly, part of the 50S ribosomal subunit. Contacts protein L29, and trigger factor when it is bound to the ribosome.

Its function is as follows. One of the early assembly proteins it binds 23S rRNA. One of the proteins that surrounds the polypeptide exit tunnel on the outside of the ribosome. Forms the main docking site for trigger factor binding to the ribosome. This is Large ribosomal subunit protein uL23 from Desulforamulus reducens (strain ATCC BAA-1160 / DSM 100696 / MI-1) (Desulfotomaculum reducens).